The following is a 698-amino-acid chain: Polyribonucleotide nucleotidyltransferase (698 aa).

Residues Asp485 and Asp491 each coordinate Mg(2+). In terms of domain architecture, KH spans Pro552 to Ile611. Positions Gly621–Lys689 constitute an S1 motif domain.

The protein belongs to the polyribonucleotide nucleotidyltransferase family. In terms of assembly, component of the RNA degradosome, which is a multiprotein complex involved in RNA processing and mRNA degradation. It depends on Mg(2+) as a cofactor.

It is found in the cytoplasm. It catalyses the reaction RNA(n+1) + phosphate = RNA(n) + a ribonucleoside 5'-diphosphate. Functionally, involved in mRNA degradation. Catalyzes the phosphorolysis of single-stranded polyribonucleotides processively in the 3'- to 5'-direction. The polypeptide is Polyribonucleotide nucleotidyltransferase (Shewanella denitrificans (strain OS217 / ATCC BAA-1090 / DSM 15013)).